The sequence spans 242 residues: Transcriptional regulatory protein btr (242 aa).

The 74-residue stretch at 158–231 (MRSEQRLAAF…QREVRLIDLP (74 aa)) folds into the HTH crp-type domain. A DNA-binding region (H-T-H motif) is located at residues 191–210 (REEIGNYLGLTLETVSRLFS).

May regulate gene expression in response to changes in oxygen levels or to changes in the redox potential of the bacterial environment. The protein is Transcriptional regulatory protein btr (btr) of Bordetella pertussis (strain Tohama I / ATCC BAA-589 / NCTC 13251).